Here is a 337-residue protein sequence, read N- to C-terminus: UDP-N-acetylenolpyruvoylglucosamine reductase (337 aa).

Residues 17–186 enclose the FAD-binding PCMH-type domain; that stretch reads IEAKAKQFIA…TSVIYKLTKR (170 aa). R162 is an active-site residue. S237 serves as the catalytic Proton donor. Residue E333 is part of the active site.

It belongs to the MurB family. The cofactor is FAD.

It localises to the cytoplasm. The catalysed reaction is UDP-N-acetyl-alpha-D-muramate + NADP(+) = UDP-N-acetyl-3-O-(1-carboxyvinyl)-alpha-D-glucosamine + NADPH + H(+). It participates in cell wall biogenesis; peptidoglycan biosynthesis. In terms of biological role, cell wall formation. In Flavobacterium johnsoniae (strain ATCC 17061 / DSM 2064 / JCM 8514 / BCRC 14874 / CCUG 350202 / NBRC 14942 / NCIMB 11054 / UW101) (Cytophaga johnsonae), this protein is UDP-N-acetylenolpyruvoylglucosamine reductase.